The primary structure comprises 259 residues: Thiazole synthase (259 aa).

K98 (schiff-base intermediate with DXP) is an active-site residue. 1-deoxy-D-xylulose 5-phosphate contacts are provided by residues G159, 185–186 (AG), and 207–208 (NS).

The protein belongs to the ThiG family. Homotetramer. Forms heterodimers with either ThiH or ThiS.

It localises to the cytoplasm. The catalysed reaction is [ThiS sulfur-carrier protein]-C-terminal-Gly-aminoethanethioate + 2-iminoacetate + 1-deoxy-D-xylulose 5-phosphate = [ThiS sulfur-carrier protein]-C-terminal Gly-Gly + 2-[(2R,5Z)-2-carboxy-4-methylthiazol-5(2H)-ylidene]ethyl phosphate + 2 H2O + H(+). It functions in the pathway cofactor biosynthesis; thiamine diphosphate biosynthesis. In terms of biological role, catalyzes the rearrangement of 1-deoxy-D-xylulose 5-phosphate (DXP) to produce the thiazole phosphate moiety of thiamine. Sulfur is provided by the thiocarboxylate moiety of the carrier protein ThiS. In vitro, sulfur can be provided by H(2)S. The sequence is that of Thiazole synthase from Chlorobium phaeobacteroides (strain BS1).